Reading from the N-terminus, the 217-residue chain is Homologous-pairing protein 2 homolog (217 aa).

A coiled-coil region spans residues 84–152 (ADLHGLDASI…RLKNIKAATN (69 aa)). Positions 118–182 (TSALTTPEMQ…WRKRKRMTTE (65 aa)) are DNA-binding.

It belongs to the HOP2 family. Interacts with the DNA-binding domain of the nuclear receptors NR3C1/GR, ESR2/ER-beta, THRB and RXRA. Forms a stable heterodimer with MND1. Interacts with PSMC3/TBP1. Post-translationally, phosphorylated by PKA, PKC and MAPK. In terms of tissue distribution, highly expressed in testis and more specifically in spermatocytes. Detected in spleen, ovary and thymus.

It localises to the nucleus. Functionally, plays an important role in meiotic recombination. Stimulates DMC1-mediated strand exchange required for pairing homologous chromosomes during meiosis. The complex PSMC3IP/MND1 binds DNA, stimulates the recombinase activity of DMC1 as well as DMC1 D-loop formation from double-strand DNA. This complex stabilizes presynaptic RAD51 and DMC1 filaments formed on single strand DNA to capture double-strand DNA. This complex stimulates both synaptic and presynaptic critical steps in RAD51 and DMC1-promoted homologous pairing. May inhibit HIV-1 viral protein TAT activity and modulate the activity of proteasomes through association with PSMC3. This is Homologous-pairing protein 2 homolog (Psmc3ip) from Mus musculus (Mouse).